Here is a 68-residue protein sequence, read N- to C-terminus: MNKRPLIEQALKRVNNRYELVHAAAKLAKDLYETGAESYVTEEGIPLKKTVISINEIAKGRAVILRKE.

It belongs to the RNA polymerase subunit omega family. The RNAP catalytic core consists of 2 alpha, 1 beta, 1 beta' and 1 omega subunit. When a sigma factor is associated with the core the holoenzyme is formed, which can initiate transcription.

The catalysed reaction is RNA(n) + a ribonucleoside 5'-triphosphate = RNA(n+1) + diphosphate. Functionally, promotes RNA polymerase assembly. Latches the N- and C-terminal regions of the beta' subunit thereby facilitating its interaction with the beta and alpha subunits. The protein is DNA-directed RNA polymerase subunit omega of Persephonella marina (strain DSM 14350 / EX-H1).